The sequence spans 1273 residues: Lysine-specific histone demethylase 2 (1273 aa).

A compositionally biased stretch (polar residues) spans 199 to 230; that stretch reads ENFFDANSPSSQQFPSTYPSRSQNPLSSSGDG. The tract at residues 199–237 is disordered; it reads ENFFDANSPSSQQFPSTYPSRSQNPLSSSGDGSTAIHAG. Residues 247–307 adopt a coiled-coil conformation; sequence FSNYPYPLDA…LSKSVDNAVL (61 aa). Residues 394–490 enclose the SWIRM domain; the sequence is AAEAARKCNL…YGCLSFDSSF (97 aa). FAD contacts are provided by residues 509 to 551, Thr517, Glu550, Arg558, and 572 to 573; these read IAVV…ILEA and TQ. A demethylase activity region spans residues 542 to 1198; sequence LPPKVIILEA…GKILRYQRLT (657 aa). Positions 571-596 are disordered; that stretch reads ATQINHHTSNSNSISSNSTSLNPKDV. Over residues 574 to 590 the composition is skewed to low complexity; the sequence is INHHTSNSNSISSNSTS. Residues 681–767 are a coiled coil; sequence SVRISWISQF…NTVDTDFSKD (87 aa). Residues 1115-1195 constitute a DNA-binding region (HMG box); that stretch reads SKPNANPFLL…AYAGKILRYQ (81 aa). FAD contacts are provided by residues Asp1147 and 1156 to 1157; that span reads ET. Residues 1215–1273 are disordered; sequence KCQDEPIPDDEARLFMQAQREEEQRKQTQDDNISKSREASDEEYHDDGSSDSGYNGTRY. A compositionally biased stretch (basic and acidic residues) spans 1233–1253; the sequence is QREEEQRKQTQDDNISKSREA. Over residues 1264–1273 the composition is skewed to polar residues; it reads SDSGYNGTRY.

Belongs to the flavin monoamine oxidase family. As to quaternary structure, component of the SWM histone demethylase complex composed of at least lsd1, lsd2, phf1 and phf2. Interacts directly with lsd1. Requires FAD as cofactor.

It is found in the nucleus. In terms of biological role, catalytic component of the SWM histone demethylase complex that specifically demethylates H3K9me2, a specific tag for epigenetic transcriptional activation, thereby acting as a corepressor. Acts by oxidizing the substrate by FAD to generate the corresponding imine that is subsequently hydrolyzed. Has a role in regulating heterochromatin propagation and euchromatic transcription. Also has a gene activating role. The chain is Lysine-specific histone demethylase 2 (lsd2) from Schizosaccharomyces pombe (strain 972 / ATCC 24843) (Fission yeast).